The primary structure comprises 390 residues: Sulfate adenylyltransferase (390 aa).

It belongs to the sulfate adenylyltransferase family.

The catalysed reaction is sulfate + ATP + H(+) = adenosine 5'-phosphosulfate + diphosphate. It functions in the pathway sulfur metabolism; hydrogen sulfide biosynthesis; sulfite from sulfate: step 1/3. In Synechocystis sp. (strain ATCC 27184 / PCC 6803 / Kazusa), this protein is Sulfate adenylyltransferase (sat).